The sequence spans 144 residues: ASPVLDANGDPLVPGGQYYVLPHIWPGPGGLSFEKTGNQTCPVSVFQLPRLPLEQNNGKPLVFTPVSETDDINEDTAVEIAFAEPPSCAESGKWLIVNDFKEEYWSVGIGGPQDHEGYQTLTGYFKIHKVGSFAYMFSFLPFVR.

N-linked (GlcNAc...) asparagine glycosylation is present at asparagine 38. Cysteines 41 and 88 form a disulfide.

Belongs to the leguminous Kunitz-type inhibitor family.

Its function is as follows. Inhibitor of porcine pancreatic elastase with a Ki of 27 nM. Does not inhibit human neutrophil elastase, bovine trypsin, human plasma kallikrein or porcine pancreatic kallikrein. This is Kunitz-type elastase inhibitor BrEI from Bauhinia rufa (Orchid tree).